The chain runs to 40 residues: Putative protein FAM86JP (40 aa).

The interval 1–40 is disordered; it reads MPGAFSQNSSKRRAVLPRSHRVAGRGPAEAGCLPGAPAGS. Over residues 10 to 23 the composition is skewed to basic residues; that stretch reads SKRRAVLPRSHRVA.

The sequence is that of Putative protein FAM86JP from Homo sapiens (Human).